A 483-amino-acid chain; its full sequence is PRAME family member 12 (483 aa).

An LRR 1; degenerate repeat occupies 97–122 (RWKLQVLDLRNVDENFWGIWSGASAL). The stretch at 177 to 201 (HVCCKELQIFGIAIHRIIEVLNTVE) is one LRR 2; degenerate repeat. One copy of the LRR 3; degenerate repeat lies at 202–228 (LDCIQEVEVCCPWELSILIRFAPYLGQ). One copy of the LRR 4; degenerate repeat lies at 229–264 (MRNLRKLVLFNIHVSACIPLDRKEQFVIQFTSQFLK). LRR repeat units follow at residues 265 to 290 (LDYFQKLYMHSVSFLEGHLDQLLRCL), 291 to 322 (QAPLETVVMTECLLSESDLKHLSWCPSIRQLK), 323 to 341 (ELDLRGITLTHFSPEPLSV), 347 to 374 (EATLQTLDLEDCGIVDSQLSAILPALSR), and 375 to 399 (CSQLSTFSFCGNLISMAALENLLRH).

It belongs to the PRAME family.

This chain is PRAME family member 12, found in Homo sapiens (Human).